We begin with the raw amino-acid sequence, 108 residues long: UPF0145 protein LJ_1287 (108 aa).

Belongs to the UPF0145 family.

This chain is UPF0145 protein LJ_1287, found in Lactobacillus johnsonii (strain CNCM I-12250 / La1 / NCC 533).